Reading from the N-terminus, the 666-residue chain is Probable potassium transport system protein Kup (666 aa).

Helical transmembrane passes span 16–36 (GFIIALGIVYGDIGTSPLYTM), 58–78 (ISLIIWTLTLITTIKYVLVAL), 99–119 (TPWLIVPAVIGGATLLSDGAL), 141–161 (IFQNQSNVIFATLFILLLLFA), 167–187 (TGVIGKLFGPIMFIWFAFLGI), 221–241 (IFILGSIFLATTGAEALYSDL), 253–273 (WPFVKVAIILSYCGQGAWILA), 292–312 (FTMHVVILATLAAIIASQALI), 343–363 (TYIPVINWFLFAITTSIVLLF), 373–393 (YGLAITITMLMTTILLSFFLI), 402–422 (VLLMMIFFGILEGIFFLASAV), and 424–444 (FMHGGYVVVIIAVAIIFIMII).

This sequence belongs to the HAK/KUP transporter (TC 2.A.72) family.

Its subcellular location is the cell membrane. The catalysed reaction is K(+)(in) + H(+)(in) = K(+)(out) + H(+)(out). Its function is as follows. Transport of potassium into the cell. Likely operates as a K(+):H(+) symporter. This chain is Probable potassium transport system protein Kup, found in Streptococcus agalactiae serotype III (strain NEM316).